A 976-amino-acid chain; its full sequence is R3H domain-containing protein 2 (976 aa).

Disordered stretches follow at residues 32-71 (ISKT…AKSN) and 105-147 (ISCP…QEYT). The segment covering 36–56 (PSKEEIEKECEDTSLRQETQR) has biased composition (basic and acidic residues). A Phosphoserine modification is found at serine 37. Residues 58–71 (TSNHGHARKRAKSN) show a composition bias toward basic residues. The span at 109-143 (SDKEEEKSTKDVSEKEDKDKNKEKIPRKMLSRDSS) shows a compositional bias: basic and acidic residues. Serine 143 is modified (phosphoserine). The region spanning 169 to 232 (RMMLLKLEQE…AVIINKTSNT (64 aa)) is the R3H domain. One can recognise an SUZ domain in the interval 233-310 (RIPEQRFSEH…NREGLSRTSS (78 aa)). Residues 257-269 (LKRDDASMDRDDN) show a composition bias toward basic and acidic residues. Disordered regions lie at residues 257–376 (LKRD…ISRP), 401–457 (CTAQ…EAAD), 480–560 (ASTG…PGLQ), 661–725 (GTSP…PSMV), and 738–780 (RGQK…SLSS). Low complexity predominate over residues 306–317 (SRTSSSRQSSTD). Phosphoserine occurs at positions 330, 333, and 349. Low complexity predominate over residues 401 to 415 (CTAQQQQQQQQQQLP). Polar residues-rich tracts occupy residues 441–453 (PFGQ…QGST) and 480–504 (ASTG…QQVL). Positions 543–560 (SPQRGQQLPQPSQQPGLQ) are enriched in low complexity. Pro residues predominate over residues 682–691 (SPSPCSPPQM). Low complexity predominate over residues 692–714 (PQQYSGVSPSGPGVVVMQLNVPN). The segment covering 748-758 (PDSSPQANTQM) has biased composition (polar residues). Over residues 759–777 (SSSPVTSPTQSPAPSPVTS) the composition is skewed to low complexity. Phosphoserine is present on residues serine 853 and serine 855. A phosphothreonine mark is found at threonine 856 and threonine 860.

The protein localises to the nucleus. In Homo sapiens (Human), this protein is R3H domain-containing protein 2 (R3HDM2).